Consider the following 282-residue polypeptide: Cytochrome c1 (282 aa).

The signal sequence occupies residues 1–24; it reads MTIKLRFVASLALVFGLAAASVPA. Heme c is bound by residues C62, C65, H66, and M207. The chain crosses the membrane as a helical span at residues 253-273; that stretch reads WWVLGFLVIFTGLLVATKIVV.

As to quaternary structure, the main subunits of complex b-c1 are: cytochrome b, cytochrome c1 and the Rieske protein. Binds 1 heme c group covalently per subunit.

The protein resides in the cell membrane. Its function is as follows. Component of the ubiquinol-cytochrome c reductase complex (complex III or cytochrome b-c1 complex), which is a respiratory chain that generates an electrochemical potential coupled to ATP synthesis. c1 functions as an electron donor to cytochrome c. The polypeptide is Cytochrome c1 (petC) (Blastochloris viridis (Rhodopseudomonas viridis)).